Consider the following 418-residue polypeptide: MGKIVIEPLSRLEGHGKVTITLDENGKPKDVKLHITALRGFEQFVVGRPAEEVPRIVPRICGICQTAHHLASVKAIDAAWGVEIPEPAKKLRELMHIGNMIHSHALHFYFLAAPDFVLGPDADPAIRNIVGVIDKAPDVAKQAIALRKFGQKIVEAVGGKAIHPVTGIPGGQAKRLTEEERDELLKDADQMIEYAKNGVELIKQLNEQYMEQIKTLGVIDTYYLGLVKDGKHNFYDDTLRFLSPDGKEKVEFKPEEYLNYIGEYVVPYNYVKHPYYKKVGYPEGVYRVGPLAMLNVCDEMETPLAEEYRKEFLEIFGFPANQSLAYNHARLIELVEACEKAKILLEDNDITSDDIKADVEPKAGNGVGVVYAPRGVLIHNYETDENGIVVKANMIVATTHNVPTMEKAIQQAAQVIFK.

The Ni(2+) site is built by Cys-61 and Cys-64.

It belongs to the [NiFe]/[NiFeSe] hydrogenase large subunit family. The F420-non-reducing hydrogenase vhu is composed of four subunits; VhuA, VhuD, VhuG and VhuU. Requires Ni(2+) as cofactor.

The chain is F420-non-reducing hydrogenase vhu subunit A (vhuA) from Methanocaldococcus jannaschii (strain ATCC 43067 / DSM 2661 / JAL-1 / JCM 10045 / NBRC 100440) (Methanococcus jannaschii).